We begin with the raw amino-acid sequence, 681 residues long: Probable L-type lectin-domain containing receptor kinase VII.2 (681 aa).

The first 23 residues, 1–23, serve as a signal peptide directing secretion; it reads MFSKVSILLFSLASLLLFRSTTG. The legume-lectin like stretch occupies residues 24-260; the sequence is IEFIYNSNFT…SHRILSWSFS (237 aa). Residues 24 to 290 lie on the Extracellular side of the membrane; it reads IEFIYNSNFT…SGDSVLKSKG (267 aa). N-linked (GlcNAc...) asparagine glycosylation is found at N31, N42, N56, N72, N126, N202, N207, N228, and N263. The helical transmembrane segment at 291–311 threads the bilayer; the sequence is FIAGVSSGVVLLVSVIGLLCF. Residues 312 to 681 are Cytoplasmic-facing; sequence YVVRRRRQRL…QTYDSILHGR (370 aa). The Protein kinase domain occupies 349 to 624; sequence FSDENMIGYG…VVQILEQGRL (276 aa). ATP contacts are provided by residues 355 to 363 and K376; that span reads IGYGGNSKV. D475 serves as the catalytic Proton acceptor.

This sequence in the C-terminal section; belongs to the protein kinase superfamily. Ser/Thr protein kinase family. The protein in the N-terminal section; belongs to the leguminous lectin family.

The protein resides in the cell membrane. The catalysed reaction is L-seryl-[protein] + ATP = O-phospho-L-seryl-[protein] + ADP + H(+). It carries out the reaction L-threonyl-[protein] + ATP = O-phospho-L-threonyl-[protein] + ADP + H(+). The chain is Probable L-type lectin-domain containing receptor kinase VII.2 (LECRK72) from Arabidopsis thaliana (Mouse-ear cress).